A 148-amino-acid polypeptide reads, in one-letter code: UPF0134 protein MPN_204 (148 aa).

Belongs to the UPF0134 family.

The sequence is that of UPF0134 protein MPN_204 from Mycoplasma pneumoniae (strain ATCC 29342 / M129 / Subtype 1) (Mycoplasmoides pneumoniae).